Here is a 455-residue protein sequence, read N- to C-terminus: N-lysine methyltransferase setd6 (455 aa).

In terms of domain architecture, SET spans proline 38 to glycine 266.

This sequence belongs to the class V-like SAM-binding methyltransferase superfamily. Histone-lysine methyltransferase family. SETD6 subfamily.

The protein localises to the nucleus. Functionally, protein-lysine N-methyltransferase. This is N-lysine methyltransferase setd6 (setd6) from Xenopus laevis (African clawed frog).